The primary structure comprises 480 residues: Glutamate--tRNA ligase (480 aa).

Residues 21–31 (PSPTGYLHVGG) carry the 'HIGH' region motif. Zn(2+)-binding residues include cysteine 110, cysteine 112, cysteine 137, and histidine 139. Positions 248–252 (KLSKR) match the 'KMSKS' region motif. Lysine 251 provides a ligand contact to ATP.

It belongs to the class-I aminoacyl-tRNA synthetase family. Glutamate--tRNA ligase type 1 subfamily. In terms of assembly, monomer. Zn(2+) is required as a cofactor.

It is found in the cytoplasm. The enzyme catalyses tRNA(Glu) + L-glutamate + ATP = L-glutamyl-tRNA(Glu) + AMP + diphosphate. Its function is as follows. Catalyzes the attachment of glutamate to tRNA(Glu) in a two-step reaction: glutamate is first activated by ATP to form Glu-AMP and then transferred to the acceptor end of tRNA(Glu). The chain is Glutamate--tRNA ligase from Mannheimia succiniciproducens (strain KCTC 0769BP / MBEL55E).